A 397-amino-acid chain; its full sequence is 3-ketoacyl-CoA thiolase, mitochondrial (397 aa).

The transit peptide at M1–P16 directs the protein to the mitochondrion; not cleaved. K25 bears the N6-acetyllysine; alternate mark. Residue K25 is modified to N6-succinyllysine; alternate. K45 is subject to N6-succinyllysine. The active-site Acyl-thioester intermediate is C92. T119 is subject to Phosphothreonine. Residue S121 is modified to Phosphoserine. Y127 is subject to Phosphotyrosine. T136 bears the Phosphothreonine mark. An N6-acetyllysine; alternate modification is found at K137. K137 carries the N6-succinyllysine; alternate modification. Residue S140 is modified to Phosphoserine. N6-acetyllysine; alternate occurs at positions 143, 171, 191, and 209. An N6-succinyllysine; alternate mark is found at K143, K171, K191, and K209. N6-succinyllysine is present on residues K211, K212, and K214. Residues R224 and T227 each coordinate CoA. K234 carries the post-translational modification N6-acetyllysine; alternate. Position 234 is an N6-succinyllysine; alternate (K234). N6-succinyllysine is present on K240. K241 bears the N6-acetyllysine mark. Residue S251 coordinates CoA. K269 and K270 each carry N6-acetyllysine. N6-acetyllysine; alternate is present on K305. Position 305 is an N6-succinyllysine; alternate (K305). S310 carries the phosphoserine modification. K312 carries the N6-acetyllysine; alternate modification. K312 bears the N6-succinyllysine; alternate mark. A Phosphoserine modification is found at S333. N6-acetyllysine is present on residues K340 and K375. Catalysis depends on C382, which acts as the Proton donor/acceptor.

Belongs to the thiolase-like superfamily. Thiolase family. Homotetramer. Interacts with BNIP3.

The protein localises to the mitochondrion. The enzyme catalyses an acyl-CoA + acetyl-CoA = a 3-oxoacyl-CoA + CoA. It catalyses the reaction 2 acetyl-CoA = acetoacetyl-CoA + CoA. The catalysed reaction is acetyl-CoA + H2O = acetate + CoA + H(+). It carries out the reaction propanoyl-CoA + H2O = propanoate + CoA + H(+). The enzyme catalyses butanoyl-CoA + H2O = butanoate + CoA + H(+). It catalyses the reaction hexanoyl-CoA + H2O = hexanoate + CoA + H(+). The catalysed reaction is octanoyl-CoA + H2O = octanoate + CoA + H(+). It carries out the reaction decanoyl-CoA + H2O = decanoate + CoA + H(+). The enzyme catalyses dodecanoyl-CoA + H2O = dodecanoate + CoA + H(+). It catalyses the reaction tetradecanoyl-CoA + H2O = tetradecanoate + CoA + H(+). The catalysed reaction is hexadecanoyl-CoA + H2O = hexadecanoate + CoA + H(+). It functions in the pathway lipid metabolism; fatty acid beta-oxidation. In the production of energy from fats, this is one of the enzymes that catalyzes the last step of the mitochondrial beta-oxidation pathway, an aerobic process breaking down fatty acids into acetyl-CoA. Using free coenzyme A/CoA, catalyzes the thiolytic cleavage of medium- to long-chain unbranched 3-oxoacyl-CoAs into acetyl-CoA and a fatty acyl-CoA shortened by two carbon atoms. Also catalyzes the condensation of two acetyl-CoA molecules into acetoacetyl-CoA and could be involved in the production of ketone bodies. Also displays hydrolase activity on various fatty acyl-CoAs. Thereby, could be responsible for the production of acetate in a side reaction to beta-oxidation. Abolishes BNIP3-mediated apoptosis and mitochondrial damage. This is 3-ketoacyl-CoA thiolase, mitochondrial (ACAA2) from Pongo abelii (Sumatran orangutan).